The primary structure comprises 351 residues: Ion-translocating oxidoreductase complex subunit D (351 aa).

A run of 4 helical transmembrane segments spans residues 18-38, 40-60, 87-107, and 121-141; these read IMLL…YFFG, GSLI…GAVL, LPPL…IVIA, and PAMV…TSWL. At Thr-185 the chain carries FMN phosphoryl threonine. Helical transmembrane passes span 211 to 231, 241 to 261, 264 to 284, 298 to 318, and 320 to 340; these read VLAG…GLLL, IPVS…MIAP, FASP…FFIA, LIFG…GGYP, and GVAF…HYTQ.

Belongs to the NqrB/RnfD family. The complex is composed of six subunits: RnfA, RnfB, RnfC, RnfD, RnfE and RnfG. FMN is required as a cofactor.

It is found in the cell inner membrane. In terms of biological role, part of a membrane-bound complex that couples electron transfer with translocation of ions across the membrane. This Yersinia pseudotuberculosis serotype I (strain IP32953) protein is Ion-translocating oxidoreductase complex subunit D.